Reading from the N-terminus, the 172-residue chain is MIDSDGFRANVGIIICNRFGQVMWARRFGQHSWQFPQGGVDEGETPEEAMFRELYEEVGLRPEHVQILTSTRSWLRYRLPKRLIRQDSKPVCIGQKQKWFLLQLKSNESAIDLNACGHPEFDDWRWVSYWYPVRQVVSFKRDVYRKVMKEFAPTALPFQTREHHHSRRGRRR.

A Nudix hydrolase domain is found at 6 to 149 (GFRANVGIII…KRDVYRKVMK (144 aa)). A Nudix box motif is present at residues 38-59 (GGVDEGETPEEAMFRELYEEVG).

This sequence belongs to the Nudix hydrolase family. RppH subfamily. A divalent metal cation serves as cofactor.

Functionally, accelerates the degradation of transcripts by removing pyrophosphate from the 5'-end of triphosphorylated RNA, leading to a more labile monophosphorylated state that can stimulate subsequent ribonuclease cleavage. The sequence is that of RNA pyrophosphohydrolase from Shewanella sediminis (strain HAW-EB3).